Consider the following 277-residue polypeptide: Bifunctional protein FolD (277 aa).

NADP(+) is bound by residues 164-166 (GRS), Ser-189, and Thr-230.

The protein belongs to the tetrahydrofolate dehydrogenase/cyclohydrolase family. In terms of assembly, homodimer.

The enzyme catalyses (6R)-5,10-methylene-5,6,7,8-tetrahydrofolate + NADP(+) = (6R)-5,10-methenyltetrahydrofolate + NADPH. It catalyses the reaction (6R)-5,10-methenyltetrahydrofolate + H2O = (6R)-10-formyltetrahydrofolate + H(+). It participates in one-carbon metabolism; tetrahydrofolate interconversion. Catalyzes the oxidation of 5,10-methylenetetrahydrofolate to 5,10-methenyltetrahydrofolate and then the hydrolysis of 5,10-methenyltetrahydrofolate to 10-formyltetrahydrofolate. The polypeptide is Bifunctional protein FolD (Clostridium perfringens (strain ATCC 13124 / DSM 756 / JCM 1290 / NCIMB 6125 / NCTC 8237 / Type A)).